Here is a 510-residue protein sequence, read N- to C-terminus: Putative serine protease K12H4.7 (510 aa).

Residues 1 to 19 form the signal peptide; the sequence is MKTLLAVLLAACVLTQVLS. The Charge relay system role is filled by Ser187. Asn234 is a glycosylation site (N-linked (GlcNAc...) asparagine). The active-site Charge relay system is Asp452. The N-linked (GlcNAc...) asparagine glycan is linked to Asn473. Catalysis depends on His477, which acts as the Charge relay system.

This sequence belongs to the peptidase S28 family.

This Caenorhabditis elegans protein is Putative serine protease K12H4.7.